Reading from the N-terminus, the 374-residue chain is Type IV secretion system protein PtlG homolog (374 aa).

Residues 38–56 (WMFALVAVALSCLLATGIW) form a helical membrane-spanning segment. The disordered stretch occupies residues 87–116 (PREPEPAPLPDMPAAPNPILPQPRPAPPVP). A compositionally biased stretch (pro residues) spans 92-116 (PAPLPDMPAAPNPILPQPRPAPPVP).

This sequence belongs to the TrbI/VirB10 family.

It localises to the cell membrane. The chain is Type IV secretion system protein PtlG homolog (ptlG) from Bordetella parapertussis (strain 12822 / ATCC BAA-587 / NCTC 13253).